The following is a 162-amino-acid chain: MDYSENVQNKNFTPISQPPNLTRDQEHAIMVSTLRQVISNTGGDTSSSHYIAASEALPPSDAGPCPLCGVTSCYGCAFPQHEEIKQEKKHKGVRKKPSGKWSAEIWDPSTRTRRWLGTFPTAEMAADAYDEAAAALVEKRSARRGSKKGEGSIHQEVGGGDD.

Disordered regions lie at residues 1 to 21 (MDYS…PPNL), 84 to 103 (IKQE…KWSA), and 139 to 162 (KRSA…GGDD). The segment covering 87 to 98 (EKKHKGVRKKPS) has biased composition (basic residues). Positions 89–146 (KHKGVRKKPSGKWSAEIWDPSTRTRRWLGTFPTAEMAADAYDEAAAALVEKRSARRGS) form a DNA-binding region, AP2/ERF.

It belongs to the AP2/ERF transcription factor family. ERF subfamily.

The protein resides in the nucleus. Its function is as follows. Probably acts as a transcriptional activator. Binds to the GCC-box pathogenesis-related promoter element. May be involved in the regulation of gene expression by stress factors and by components of stress signal transduction pathways. The polypeptide is Putative ethylene-responsive transcription factor ERF121 (ERF121) (Arabidopsis thaliana (Mouse-ear cress)).